The primary structure comprises 143 residues: Large ribosomal subunit protein uL11 (143 aa).

The protein belongs to the universal ribosomal protein uL11 family. In terms of assembly, part of the ribosomal stalk of the 50S ribosomal subunit. Interacts with L10 and the large rRNA to form the base of the stalk. L10 forms an elongated spine to which L12 dimers bind in a sequential fashion forming a multimeric L10(L12)X complex. Post-translationally, one or more lysine residues are methylated.

In terms of biological role, forms part of the ribosomal stalk which helps the ribosome interact with GTP-bound translation factors. This Alkalilimnicola ehrlichii (strain ATCC BAA-1101 / DSM 17681 / MLHE-1) protein is Large ribosomal subunit protein uL11.